The sequence spans 289 residues: UDP-3-O-acyl-N-acetylglucosamine deacetylase (289 aa).

The Zn(2+) site is built by H79, H236, and D240. H263 serves as the catalytic Proton donor.

The protein belongs to the LpxC family. Zn(2+) is required as a cofactor.

It carries out the reaction a UDP-3-O-[(3R)-3-hydroxyacyl]-N-acetyl-alpha-D-glucosamine + H2O = a UDP-3-O-[(3R)-3-hydroxyacyl]-alpha-D-glucosamine + acetate. It functions in the pathway glycolipid biosynthesis; lipid IV(A) biosynthesis; lipid IV(A) from (3R)-3-hydroxytetradecanoyl-[acyl-carrier-protein] and UDP-N-acetyl-alpha-D-glucosamine: step 2/6. In terms of biological role, catalyzes the hydrolysis of UDP-3-O-myristoyl-N-acetylglucosamine to form UDP-3-O-myristoylglucosamine and acetate, the committed step in lipid A biosynthesis. The protein is UDP-3-O-acyl-N-acetylglucosamine deacetylase of Rickettsia typhi (strain ATCC VR-144 / Wilmington).